Reading from the N-terminus, the 377-residue chain is uncharacterized protein (377 aa).

Polar residues-rich tracts occupy residues 1–11 and 31–43; these read MSSIQGTSGSS and PSGQ…AVGK. Disordered stretches follow at residues 1–43, 109–141, and 328–377; these read MSSI…AVGK, SSEE…IARN, and SSSP…RGFQ. Residues 334-345 are compositionally biased toward basic and acidic residues; sequence EDPRSLRDRLRD.

Belongs to the chlamydial CPn_0499/CT_392/TC_0671 family.

This is an uncharacterized protein from Chlamydia trachomatis serovar D (strain ATCC VR-885 / DSM 19411 / UW-3/Cx).